Here is a 149-residue protein sequence, read N- to C-terminus: Transcriptional repressor NrdR (149 aa).

A zinc finger spans residues 3–34 (CPFCSENDTKVIDSRLVADGHQVRRRRQCLAC). An ATP-cone domain is found at 49–139 (PRVIKSNGNR…VYRSFEDVRE (91 aa)).

Belongs to the NrdR family. Zn(2+) serves as cofactor.

Functionally, negatively regulates transcription of bacterial ribonucleotide reductase nrd genes and operons by binding to NrdR-boxes. This Vibrio cholerae serotype O1 (strain ATCC 39541 / Classical Ogawa 395 / O395) protein is Transcriptional repressor NrdR.